Reading from the N-terminus, the 177-residue chain is F(420)H(2) dehydrogenase subunit I (177 aa).

The interval 1–21 (MGCPEVQDRPGSGYELEETPA) is disordered. 4Fe-4S ferredoxin-type domains follow at residues 76–105 (GLQT…IVKA) and 116–145 (WFPQ…SGKE). The [4Fe-4S] cluster site is built by cysteine 85, cysteine 88, cysteine 91, cysteine 95, cysteine 125, cysteine 128, cysteine 131, and cysteine 135.

It belongs to the complex I 23 kDa subunit family. The FPO complex is composed of at least 13 different subunits. The cofactor is [4Fe-4S] cluster.

The enzyme catalyses methanophenazine + reduced coenzyme F420-(gamma-L-Glu)(n) = dihydromethanophenazine + oxidized coenzyme F420-(gamma-L-Glu)(n) + H(+). Component of the F(420)H(2) dehydrogenase (FPO complex) which is part of the energy-conserving F(420)H(2):heterodisulfide oxidoreductase system. The membrane-bound electron transfer system of the complex plays an important role in the metabolism of methylotrophic methanogens when the organisms grow on methanol or methylamines. Catalyzes the oxidation of methanophenazine to dihydromethanophenazine. It shuttles electrons from F(420)H(2), via FAD and iron-sulfur (Fe-S) centers, to methanophenazine (an electron carrier in the membrane). It couples the redox reaction to proton translocation (for every two electrons transferred, two hydrogen ions are translocated across the cytoplasmic membrane), and thus conserves the redox energy in a proton gradient. It also catalyzes the oxidation of F(420)H(2) with quinones such as 2,3-dimethyl-1,4-naphthoquinone, 2-methyl-1,4-naphthoquinone and tetramethyl-p-benzoquinone. The protein is F(420)H(2) dehydrogenase subunit I (fpoI) of Methanosarcina mazei (strain ATCC BAA-159 / DSM 3647 / Goe1 / Go1 / JCM 11833 / OCM 88) (Methanosarcina frisia).